A 369-amino-acid polypeptide reads, in one-letter code: Queuine tRNA-ribosyltransferase (369 aa).

Residue D89 is the Proton acceptor of the active site. Substrate is bound by residues 89–93 (DSGGF), D142, Q184, and G211. Positions 242 to 248 (GGGSPEL) are RNA binding. D261 functions as the Nucleophile in the catalytic mechanism. The RNA binding; important for wobble base 34 recognition stretch occupies residues 266-270 (TRIAR). The Zn(2+) site is built by C299, C301, C304, and H330.

This sequence belongs to the queuine tRNA-ribosyltransferase family. As to quaternary structure, homodimer. Within each dimer, one monomer is responsible for RNA recognition and catalysis, while the other monomer binds to the replacement base PreQ1. The cofactor is Zn(2+).

It catalyses the reaction 7-aminomethyl-7-carbaguanine + guanosine(34) in tRNA = 7-aminomethyl-7-carbaguanosine(34) in tRNA + guanine. It functions in the pathway tRNA modification; tRNA-queuosine biosynthesis. In terms of biological role, catalyzes the base-exchange of a guanine (G) residue with the queuine precursor 7-aminomethyl-7-deazaguanine (PreQ1) at position 34 (anticodon wobble position) in tRNAs with GU(N) anticodons (tRNA-Asp, -Asn, -His and -Tyr). Catalysis occurs through a double-displacement mechanism. The nucleophile active site attacks the C1' of nucleotide 34 to detach the guanine base from the RNA, forming a covalent enzyme-RNA intermediate. The proton acceptor active site deprotonates the incoming PreQ1, allowing a nucleophilic attack on the C1' of the ribose to form the product. After dissociation, two additional enzymatic reactions on the tRNA convert PreQ1 to queuine (Q), resulting in the hypermodified nucleoside queuosine (7-(((4,5-cis-dihydroxy-2-cyclopenten-1-yl)amino)methyl)-7-deazaguanosine). In Thermotoga neapolitana (strain ATCC 49049 / DSM 4359 / NBRC 107923 / NS-E), this protein is Queuine tRNA-ribosyltransferase.